A 194-amino-acid chain; its full sequence is NADH-quinone oxidoreductase subunit B (194 aa).

The segment at 1–26 (MGLTPSATKPEIAQAPQGIVDPSTGR) is disordered. Cys73, Cys74, Cys138, and Cys168 together coordinate [4Fe-4S] cluster.

Belongs to the complex I 20 kDa subunit family. As to quaternary structure, NDH-1 is composed of 14 different subunits. Subunits NuoB, C, D, E, F, and G constitute the peripheral sector of the complex. [4Fe-4S] cluster serves as cofactor.

The protein resides in the cell inner membrane. The catalysed reaction is a quinone + NADH + 5 H(+)(in) = a quinol + NAD(+) + 4 H(+)(out). Its function is as follows. NDH-1 shuttles electrons from NADH, via FMN and iron-sulfur (Fe-S) centers, to quinones in the respiratory chain. The immediate electron acceptor for the enzyme in this species is believed to be ubiquinone. Couples the redox reaction to proton translocation (for every two electrons transferred, four hydrogen ions are translocated across the cytoplasmic membrane), and thus conserves the redox energy in a proton gradient. This is NADH-quinone oxidoreductase subunit B from Xanthobacter autotrophicus (strain ATCC BAA-1158 / Py2).